The sequence spans 1147 residues: uncharacterized protein (1147 aa).

Disordered stretches follow at residues 226 to 245 (FGQG…GQVD), 255 to 297 (IQGT…QEKA), 431 to 617 (SQHP…QSCI), 647 to 670 (EEMD…DPVR), 705 to 945 (HRHR…RRLQ), 1003 to 1032 (RQQQ…EAEK), and 1060 to 1090 (YQRR…RLAQ). The span at 268 to 296 (WQKDETQTEDTSKDNHHCIHTSKENHQEK) shows a compositional bias: basic and acidic residues. A compositionally biased stretch (basic residues) spans 431-441 (SQHPPKGKAQR). Positions 538–549 (PAGGALPAAGQA) are enriched in low complexity. Residues 584 to 603 (LNETSPLTQKPENQGAQQSL) are compositionally biased toward polar residues. Residues 743–752 (NQKTSNNISN) are compositionally biased toward polar residues. Residues 743–804 (NQKTSNNISN…ESKAEKKSQL (62 aa)) adopt a coiled-coil conformation. Basic and acidic residues predominate over residues 768 to 802 (TDKSKAPKREKEGKLHEEAEAAVGKSKESKAEKKS). The span at 807–819 (KGKKTGAKGKRTR) shows a compositional bias: basic residues. Over residues 870–884 (SQVSIDGRSSPTQTA) the composition is skewed to polar residues. The span at 895–945 (DRSHEDPSKAFLVKREQEKASRDRLRAERAEMRRLEVERKRREQEEQRRLQ) shows a compositional bias: basic and acidic residues. The stretch at 907-1112 (VKREQEKASR…QKDALKKHLH (206 aa)) forms a coiled coil.

This is an uncharacterized protein from Bos taurus (Bovine).